Here is a 580-residue protein sequence, read N- to C-terminus: MYKFDQKLNHSAAHLLAMALTKFYPNLSLAIGPTIDEGFYYDFNLNDPNTSITPLDLLKIEKEMKKITTQALTFDYEQVTYEKAKELFKHNKYKLDIIEQNKNNSLSIYHSGKWFDLCKGPHVQNTKEIKAIKLLNIAGSYWRGDANNDQLIRIYGVAFSDQDQLDAYLKDLQERKERDHRKIGKDLNLFTFNNLAGQGLPIWLPNGTIIKNQVQKFINEVEFQFNFDTVITPILGSIDLYKTSGHWDHYKDNIFSPVQIDNEILVLRPMTCPHHTLVYSNELRSYRSLPIRLSEHSILHRYESSGGLTGFERVREMILEDCHVFCRFDQIEHEVINAFKMIQEAQEGLGIKTFEIHLSLNDPNDKEKYYDDPQMWEQSQNVLRKMLKDHNIPYKEMVGEAAFYGPKIDFQVKTVLNRIITVSTIQLDFLLPNRFNLTYINESNEQSVPVMIHIGIIGTYERLLAILLEQTKGILPLWLSPIQVVIIPVNENLHTDYVKELNIKLRKHLIRSNVDLRNERLSKKIREAQIQKIPYQIVIGDEEIKNNKMVTYRCYGSEKTTTVSITDFINMLENKIRLKK.

Positions 179 to 476 (DHRKIGKDLN…LLEQTKGILP (298 aa)) are catalytic. Cysteine 272, histidine 323, and histidine 453 together coordinate Zn(2+).

It belongs to the class-II aminoacyl-tRNA synthetase family. Homodimer. Zn(2+) is required as a cofactor.

It localises to the cytoplasm. The enzyme catalyses tRNA(Thr) + L-threonine + ATP = L-threonyl-tRNA(Thr) + AMP + diphosphate + H(+). Its function is as follows. Catalyzes the attachment of threonine to tRNA(Thr) in a two-step reaction: L-threonine is first activated by ATP to form Thr-AMP and then transferred to the acceptor end of tRNA(Thr). Also edits incorrectly charged L-seryl-tRNA(Thr). This chain is Threonine--tRNA ligase, found in Ureaplasma parvum serovar 3 (strain ATCC 27815 / 27 / NCTC 11736).